Here is a 395-residue protein sequence, read N- to C-terminus: ATP synthase subunit a (395 aa).

5 helical membrane-spanning segments follow: residues 153–173, 246–266, 273–293, 313–333, and 339–359; these read FTNP…LVYF, HFLI…IVGF, FLSF…LVLL, MMAG…MLCM, and FIGD…ELGV.

Belongs to the ATPase A chain family. F-type ATPases have 2 components, CF(1) - the catalytic core - and CF(0) - the membrane proton channel. CF(1) has five subunits: alpha(3), beta(3), gamma(1), delta(1), epsilon(1). CF(0) has three main subunits: a, b and c.

It localises to the mitochondrion inner membrane. Mitochondrial membrane ATP synthase (F(1)F(0) ATP synthase or Complex V) produces ATP from ADP in the presence of a proton gradient across the membrane which is generated by electron transport complexes of the respiratory chain. F-type ATPases consist of two structural domains, F(1) - containing the extramembraneous catalytic core and F(0) - containing the membrane proton channel, linked together by a central stalk and a peripheral stalk. During catalysis, ATP synthesis in the catalytic domain of F(1) is coupled via a rotary mechanism of the central stalk subunits to proton translocation. Key component of the proton channel; it may play a direct role in the translocation of protons across the membrane. The chain is ATP synthase subunit a (ATP6) from Nicotiana tabacum (Common tobacco).